A 380-amino-acid chain; its full sequence is uncharacterized protein (380 aa).

Disordered stretches follow at residues 278-323 and 345-368; these read AATI…PRVA and SLPGRESTPSDDGGSLHPSGRPRR. The span at 301 to 319 shows a compositional bias: basic residues; sequence RNGPRRPARRGTSRGRRCA.

This is an uncharacterized protein from Mycobacterium tuberculosis (strain CDC 1551 / Oshkosh).